A 469-amino-acid chain; its full sequence is Serine hydroxymethyltransferase, cytosolic (469 aa).

Thr-20 is modified (phosphothreonine). Position 26 is a phosphoserine (Ser-26). Lys-248 is subject to N6-(pyridoxal phosphate)lysine. Ser-429 carries the post-translational modification Phosphoserine. Lys-456 is covalently cross-linked (Glycyl lysine isopeptide (Lys-Gly) (interchain with G-Cter in ubiquitin)).

It belongs to the SHMT family. Homotetramer. Requires pyridoxal 5'-phosphate as cofactor.

The protein localises to the cytoplasm. It carries out the reaction (6R)-5,10-methylene-5,6,7,8-tetrahydrofolate + glycine + H2O = (6S)-5,6,7,8-tetrahydrofolate + L-serine. The protein operates within one-carbon metabolism; tetrahydrofolate interconversion. Its function is as follows. Interconversion of serine and glycine. This chain is Serine hydroxymethyltransferase, cytosolic, found in Saccharomyces cerevisiae (strain ATCC 204508 / S288c) (Baker's yeast).